Reading from the N-terminus, the 1728-residue chain is Protein NETWORKED 1A (1728 aa).

The 80-residue stretch at 13 to 92 folds into the NAB domain; sequence YSWWWDSHIP…ERYDHATVEL (80 aa). Coiled-coil stretches lie at residues 155–446, 476–827, 857–885, 954–1016, 1090–1323, 1403–1431, and 1576–1684; these read LGNS…LEIE, MLRD…QVEI, FSEK…EIDN, QFQS…AELQ, EQAE…KETV, LLQD…LRRR, and RRLA…TKSK. Residues 1419–1441 are disordered; it reads AEEKKRRGKLRRRSSSHRSKDRK. Over residues 1424 to 1439 the composition is skewed to basic residues; sequence RRGKLRRRSSSHRSKD.

This sequence belongs to the NET family. As to quaternary structure, interacts with F-actin. Expressed in root meristems and at very low levels throughout mature vasculature.

It is found in the cytoplasm. It localises to the cytoskeleton. The protein localises to the cell membrane. Its subcellular location is the cell junction. The protein resides in the plasmodesma. In terms of biological role, plant-specific actin binding protein. Associates with F-actin at the plasma membrane and plasmodesmata. May be part of a membrane-cytoskeletal adapter complex. This chain is Protein NETWORKED 1A, found in Arabidopsis thaliana (Mouse-ear cress).